Reading from the N-terminus, the 349-residue chain is Phenylalanine--tRNA ligase alpha subunit (349 aa).

Glutamate 258 is a Mg(2+) binding site.

It belongs to the class-II aminoacyl-tRNA synthetase family. Phe-tRNA synthetase alpha subunit type 1 subfamily. As to quaternary structure, tetramer of two alpha and two beta subunits. It depends on Mg(2+) as a cofactor.

The protein resides in the cytoplasm. It catalyses the reaction tRNA(Phe) + L-phenylalanine + ATP = L-phenylalanyl-tRNA(Phe) + AMP + diphosphate + H(+). This is Phenylalanine--tRNA ligase alpha subunit from Rickettsia canadensis (strain McKiel).